The primary structure comprises 140 residues: Mialostatin (140 aa).

Positions 1–18 are cleaved as a signal peptide; that stretch reads MAFFKSAVFLVCVVLAAA. 2 cysteine pairs are disulfide-bonded: Cys90–Cys103 and Cys114–Cys134.

Belongs to the cystatin family. In terms of tissue distribution, expressed in midgut (at protein level).

Its subcellular location is the secreted. In terms of biological role, inhibitor of cysteine proteinases. Inhibits several endogenous midgut digestive cysteine proteases, such as cathepsin L1, L3, B and C, but not aspartic protease cathepsin D1 and cysteine protease legumain. Inhibits proteolysis of blood proteins catalyzed by tick gut cysteine cathepsins. Inhibits host cathepsin B (CSTB), C (CTSC), H (CTSH), K (CTSK), L (CTSL) and S (CTSS). The chain is Mialostatin from Ixodes ricinus (Common tick).